The chain runs to 423 residues: Gamma-glutamyl phosphate reductase (423 aa).

Belongs to the gamma-glutamyl phosphate reductase family.

It localises to the cytoplasm. The enzyme catalyses L-glutamate 5-semialdehyde + phosphate + NADP(+) = L-glutamyl 5-phosphate + NADPH + H(+). It functions in the pathway amino-acid biosynthesis; L-proline biosynthesis; L-glutamate 5-semialdehyde from L-glutamate: step 2/2. Catalyzes the NADPH-dependent reduction of L-glutamate 5-phosphate into L-glutamate 5-semialdehyde and phosphate. The product spontaneously undergoes cyclization to form 1-pyrroline-5-carboxylate. The sequence is that of Gamma-glutamyl phosphate reductase from Burkholderia thailandensis (strain ATCC 700388 / DSM 13276 / CCUG 48851 / CIP 106301 / E264).